The following is a 380-amino-acid chain: MMKKYSLTTHSTETCQILFTSVSNVFKYIPSGTRRILIMYQDSVSQVLPIFSAASGVQCYRYLIPDSESAKQLGVAEQCWRFLAQNNFTRSDLIVSCGGGAASDLSGFVASSYLRGIKVIHIPTTLVGMVDAAIGGKTGINLKEGKNLVGSFYSPYIVLCDPSMLTTLNEEHLKSGLAEIIKCGFIQDESILSILEHNAQDHMDCSQRVCAETLPPKLLEELIHKAVSVKITMVDSDFRDTHKRQFLNYGHTLAHALEAATSHKLPHGQAVSIGMVYAAQVAFAKGLIGRNILTRHERILETYGLPICPPEVQWRNITPYMQRDKKNMQSNDTDSDKDSREMPQISTQSKLVLLREIANPFISSVSHTVLLKAYEAMFPQ.

Residues 100-104 (GAASD), 124-125 (TT), Lys-137, and Lys-146 each bind NAD(+). Residues Glu-179, His-251, and His-267 each coordinate Zn(2+). The segment at 320–343 (YMQRDKKNMQSNDTDSDKDSREMP) is disordered.

The protein belongs to the sugar phosphate cyclases superfamily. Dehydroquinate synthase family. It depends on NAD(+) as a cofactor. The cofactor is Co(2+). Requires Zn(2+) as cofactor.

The protein resides in the cytoplasm. The enzyme catalyses 7-phospho-2-dehydro-3-deoxy-D-arabino-heptonate = 3-dehydroquinate + phosphate. It functions in the pathway metabolic intermediate biosynthesis; chorismate biosynthesis; chorismate from D-erythrose 4-phosphate and phosphoenolpyruvate: step 2/7. Functionally, catalyzes the conversion of 3-deoxy-D-arabino-heptulosonate 7-phosphate (DAHP) to dehydroquinate (DHQ). The chain is 3-dehydroquinate synthase from Tropheryma whipplei (strain Twist) (Whipple's bacillus).